The sequence spans 45 residues: uncharacterized protein (45 aa).

This is an uncharacterized protein from Lolium latent virus (isolate Lolium/USA/US1/-) (LoLV).